Reading from the N-terminus, the 201-residue chain is uncharacterized protein (201 aa).

A signal peptide spans 1–23 (MKILYFIFVIIINILLILNHVKS). Residues 24 to 178 (KYNTFIFENT…GNYGEDPQRN (155 aa)) are Extracellular-facing. N114 and N134 each carry an N-linked (GlcNAc...) asparagine glycan. Positions 122 to 157 (TPETPSPTENAPNTSGGSSEGNHYTYKSSSSSSEHI) are disordered. The segment covering 123-148 (PETPSPTENAPNTSGGSSEGNHYTYK) has biased composition (polar residues). A helical membrane pass occupies residues 179–199 (IGISLSSSLIFISILFLIIFI). Residues 200-201 (NN) lie on the Cytoplasmic side of the membrane.

It is found in the membrane. This is an uncharacterized protein from Dictyostelium discoideum (Social amoeba).